Consider the following 490-residue polypeptide: Glucose-6-phosphate 1-dehydrogenase (490 aa).

Residues arginine 49, 91–92, and lysine 146 contribute to the NADP(+) site; that span reads DV. Residues histidine 176, lysine 180, glutamate 214, and aspartate 233 each contribute to the substrate site. The Proton acceptor role is filled by histidine 238. Lysine 338 and lysine 343 together coordinate substrate.

The protein belongs to the glucose-6-phosphate dehydrogenase family.

The catalysed reaction is D-glucose 6-phosphate + NADP(+) = 6-phospho-D-glucono-1,5-lactone + NADPH + H(+). The protein operates within carbohydrate degradation; pentose phosphate pathway; D-ribulose 5-phosphate from D-glucose 6-phosphate (oxidative stage): step 1/3. Functionally, catalyzes the oxidation of glucose 6-phosphate to 6-phosphogluconolactone. This is Glucose-6-phosphate 1-dehydrogenase from Buchnera aphidicola subsp. Schizaphis graminum (strain Sg).